Here is a 118-residue protein sequence, read N- to C-terminus: uncharacterized protein (118 aa).

A signal peptide spans 1–18 (MSKLIFLFVVATLATIKA). Asparagine 24 carries an N-linked (GlcNAc...) asparagine; by host glycan.

This is an uncharacterized protein from Magallana gigas (Pacific oyster).